The following is a 535-amino-acid chain: D-2-hydroxyglutarate dehydrogenase, mitochondrial (535 aa).

The N-terminal 50 residues, 1–50 (MVLHLVPRWSASLFRASPRWKKTYSQRASAQLKWLGCPRSVYSPLACRAY), are a transit peptide targeting the mitochondrion. One can recognise an FAD-binding PCMH-type domain in the interval 110 to 289 (VRGCSKVLLR…TAVSIVCPPR (180 aa)). N6-succinyllysine is present on lysine 115. (R)-2-hydroxyglutarate-binding residues include arginine 400, threonine 404, and lysine 415. Arginine 400 contributes to the (R)-lactate binding site. 3 residues coordinate (R)-malate: arginine 400, threonine 404, and lysine 415. Zn(2+) contacts are provided by histidine 448 and histidine 455. Asparagine 457 serves as a coordination point for (R)-2-hydroxyglutarate. Glutamate 489 is a binding site for Zn(2+). A (R)-2-hydroxyglutarate-binding site is contributed by histidine 490. (R)-lactate is bound at residue histidine 490. Residue histidine 490 coordinates (R)-malate.

It belongs to the FAD-binding oxidoreductase/transferase type 4 family. It depends on FAD as a cofactor.

The protein localises to the mitochondrion. The catalysed reaction is (R)-2-hydroxyglutarate + A = 2-oxoglutarate + AH2. It carries out the reaction (R)-malate + A = oxaloacetate + AH2. With respect to regulation, activated by zinc, cobalt and manganese ions. Inhibited by EDTA. In terms of biological role, catalyzes the oxidation of D-2-hydroxyglutarate (D-2-HG) to alpha-ketoglutarate. Also catalyzes the oxidation of other D-2-hydroxyacids, such as D-malate (D-MAL) and D-lactate (D-LAC). Exhibits high activities towards D-2-HG and D-MAL but a very weak activity towards D-LAC. This Rattus norvegicus (Rat) protein is D-2-hydroxyglutarate dehydrogenase, mitochondrial.